The following is a 143-amino-acid chain: Nucleoside diphosphate kinase (143 aa).

ATP-binding residues include Lys11, Phe59, Arg87, Thr93, Arg104, and Asn114. His117 (pros-phosphohistidine intermediate) is an active-site residue.

The protein belongs to the NDK family. As to quaternary structure, homotetramer. Mg(2+) is required as a cofactor.

Its subcellular location is the cytoplasm. The catalysed reaction is a 2'-deoxyribonucleoside 5'-diphosphate + ATP = a 2'-deoxyribonucleoside 5'-triphosphate + ADP. It catalyses the reaction a ribonucleoside 5'-diphosphate + ATP = a ribonucleoside 5'-triphosphate + ADP. In terms of biological role, major role in the synthesis of nucleoside triphosphates other than ATP. The ATP gamma phosphate is transferred to the NDP beta phosphate via a ping-pong mechanism, using a phosphorylated active-site intermediate. The protein is Nucleoside diphosphate kinase of Salmonella arizonae (strain ATCC BAA-731 / CDC346-86 / RSK2980).